We begin with the raw amino-acid sequence, 301 residues long: Small ribosomal subunit protein uS2 (301 aa).

Positions 237–301 (PTESWNDTVV…QDWSNSTSQW (65 aa)) are disordered. Residues 264-278 (PQYAPAPQAAAAPVA) are compositionally biased toward low complexity.

It belongs to the universal ribosomal protein uS2 family. In terms of assembly, component of the small ribosomal subunit. Mature ribosomes consist of a small (40S) and a large (60S) subunit. The 40S subunit contains about 33 different proteins and 1 molecule of RNA (18S). The 60S subunit contains about 49 different proteins and 3 molecules of RNA (28S, 5.8S and 5S). Interacts with ribosomal protein S21.

It is found in the cytoplasm. Required for the assembly and/or stability of the 40S ribosomal subunit. Required for the processing of the 20S rRNA-precursor to mature 18S rRNA in a late step of the maturation of 40S ribosomal subunits. In Diaphorina citri (Asian citrus psyllid), this protein is Small ribosomal subunit protein uS2.